A 365-amino-acid polypeptide reads, in one-letter code: MDFKLTVLPGDGIGPEVMAEGLKVLNAVAKKYKHSFEYQYGLIGGCCIDKEGVALSPETLAMCKKSDAVLLAAVGDPRFDDPKLPVHPEDGLLALRRGLGLFANIRPVKVAPSLVNSAPIKAEIVKGTDFIFIRELTGGVYFAKPKKRWTTPSGIRKATDSMTYSEKEIERIVRVGFELARSRKKKLVSVDKANVLLSSRLWRQIVIEIAKDYPDITVEHILVDACAMKLILAPTYFDVIVTENMFGDILTDEASMLAGSMGMLPSASLAGIPAKGTKTFGLYEPIHGSAPTIAKQNIANPIATILSIAMMLRYSCGLETEAAEIEAAVDKVLAAGYATIDIFKEGNTKLGTAEMGSQIAKIIGG.

Residues R96, R106, R134, and D224 each coordinate substrate. Residues D224, D248, and D252 each contribute to the Mg(2+) site. Position 288–300 (288–300 (GSAPTIAKQNIAN)) interacts with NAD(+).

Belongs to the isocitrate and isopropylmalate dehydrogenases family. LeuB type 1 subfamily. In terms of assembly, homodimer. Mg(2+) serves as cofactor. It depends on Mn(2+) as a cofactor.

The protein resides in the cytoplasm. It catalyses the reaction (2R,3S)-3-isopropylmalate + NAD(+) = 4-methyl-2-oxopentanoate + CO2 + NADH. It participates in amino-acid biosynthesis; L-leucine biosynthesis; L-leucine from 3-methyl-2-oxobutanoate: step 3/4. Its function is as follows. Catalyzes the oxidation of 3-carboxy-2-hydroxy-4-methylpentanoate (3-isopropylmalate) to 3-carboxy-4-methyl-2-oxopentanoate. The product decarboxylates to 4-methyl-2 oxopentanoate. This Dehalococcoides mccartyi (strain ATCC BAA-2266 / KCTC 15142 / 195) (Dehalococcoides ethenogenes (strain 195)) protein is 3-isopropylmalate dehydrogenase.